A 224-amino-acid chain; its full sequence is Cysteine S-methyltransferase NleE (224 aa).

The interaction with host proteins TAB2, TAB3 and ZRANB3 stretch occupies residues 49 to 52 (GITR). Positions 92, 98, 107, 111, 204, and 208 each coordinate S-adenosyl-L-methionine.

This sequence belongs to the NleE/OspZ family. Monomer.

Its subcellular location is the secreted. It localises to the host nucleus. It catalyses the reaction L-cysteinyl-[protein] + S-adenosyl-L-methionine = S-methyl-L-cysteinyl-[protein] + S-adenosyl-L-homocysteine + H(+). Functionally, cysteine methyltransferase effector that inhibits host cell NF-kappa-B activation by preventing nuclear translocation of host protein RELA/p65. Acts by mediating cysteine methylation of host proteins TAB2 and TAB3: methylation of a conserved cysteine residue of the RanBP2-type zinc finger (NZF) of TAB2 and TAB3 disrupts zinc-binding, thereby inactivating the ubiquitin chain-binding activity of TAB2 and TAB3, leading to NF-kappa-B inactivation. Also mediates cysteine methylation of host protein ZRANB3, inactivating its ability to bind ubiquitin chains. The sequence is that of Cysteine S-methyltransferase NleE from Escherichia coli O157:H7.